The chain runs to 320 residues: Heterogeneous nuclear ribonucleoprotein A1-like 3 (320 aa).

RRM domains are found at residues 14-97 (RKLF…DSQR) and 105-184 (KKIF…LSKQ). 2 disordered regions span residues 182 to 218 (SKQE…NFGR) and 271 to 320 (SNFG…GRRF). Residues 197–218 (SGSGNFGGGRGGGFGGNDNFGR) show a composition bias toward gly residues. Over residues 308 to 320 (SSSSSSYGSGRRF) the composition is skewed to low complexity.

This is Heterogeneous nuclear ribonucleoprotein A1-like 3 from Homo sapiens (Human).